A 365-amino-acid polypeptide reads, in one-letter code: Protein Wnt-6 (365 aa).

Residues 1–24 form the signal peptide; the sequence is MLPPLPSRLGLLLLLLLCPAHVGG. Intrachain disulfides connect Cys-76-Cys-87, Cys-124-Cys-132, Cys-134-Cys-172, Cys-222-Cys-236, Cys-224-Cys-231, Cys-294-Cys-325, Cys-310-Cys-320, Cys-324-Cys-364, Cys-340-Cys-355, Cys-342-Cys-352, and Cys-347-Cys-348. A glycan (N-linked (GlcNAc...) asparagine) is linked at Asn-86. Positions 140 to 158 are enriched in pro residues; the sequence is RAPPRPSGLPGTPGPPGPA. Positions 140 to 164 are disordered; it reads RAPPRPSGLPGTPGPPGPAGSPEGS. Ser-228 is lipidated: O-palmitoleoyl serine; by PORCN. The N-linked (GlcNAc...) asparagine glycan is linked to Asn-311.

It belongs to the Wnt family. In terms of assembly, interacts with PORCN. Post-translationally, palmitoleoylation is required for efficient binding to frizzled receptors. Depalmitoleoylation leads to Wnt signaling pathway inhibition. As to expression, expressed in gastric cancer cell lines and gastric cancer tissues (at protein level). Detected in the apical gland region of the gastric foveolar epithelium (at protein level).

It is found in the secreted. The protein resides in the extracellular space. It localises to the extracellular matrix. Functionally, ligand for members of the frizzled family of seven transmembrane receptors. Probable developmental protein. May be a signaling molecule which affects the development of discrete regions of tissues. Is likely to signal over only few cell diameters. Together with CAV1 may promote chemoresistance of gastric cancer cells to DNA-damaging anthracycline drugs through the activation of the canonical Wnt receptor signaling pathway. This chain is Protein Wnt-6 (WNT6), found in Homo sapiens (Human).